The following is a 1588-amino-acid chain: Pentafunctional AROM polypeptide (1588 aa).

The 3-dehydroquinate synthase stretch occupies residues 1-392 (MVQLAKVPIL…YGDSAQFVSD (392 aa)). NAD(+) contacts are provided by residues 43–45 (DTN), 78–81 (ETSK), 109–111 (GGV), and aspartate 114. Arginine 125 is a binding site for 7-phospho-2-dehydro-3-deoxy-D-arabino-heptonate. 134–135 (TS) is a binding site for NAD(+). 7-phospho-2-dehydro-3-deoxy-D-arabino-heptonate-binding residues include aspartate 141 and lysine 147. NAD(+) is bound at residue lysine 156. A 7-phospho-2-dehydro-3-deoxy-D-arabino-heptonate-binding site is contributed by asparagine 157. Residues 174 to 177 (WLET) and asparagine 185 each bind NAD(+). Glutamate 189 lines the Zn(2+) pocket. 7-phospho-2-dehydro-3-deoxy-D-arabino-heptonate is bound by residues 189–192 (EVIK) and lysine 258. Catalysis depends on glutamate 268, which acts as the Proton acceptor; for 3-dehydroquinate synthase activity. Residues 272-276 (RNLLN) and histidine 279 each bind 7-phospho-2-dehydro-3-deoxy-D-arabino-heptonate. Zn(2+) is bound at residue histidine 279. Catalysis depends on histidine 283, which acts as the Proton acceptor; for 3-dehydroquinate synthase activity. 7-phospho-2-dehydro-3-deoxy-D-arabino-heptonate contacts are provided by histidine 295 and lysine 364. Histidine 295 contacts Zn(2+). Residues 405 to 871 (VYPFKDIPAD…WDVLHSELGA (467 aa)) are EPSP synthase. Catalysis depends on cysteine 853, which acts as the For EPSP synthase activity. Positions 890–1080 (SVVIIGMRAA…IPSGRSAFVC (191 aa)) are shikimate kinase. 895–902 (GMRAAGKT) is an ATP binding site. A 3-dehydroquinase region spans residues 1081–1293 (LTFDDLTEQT…AAPGQLTVAQ (213 aa)). Histidine 1198 acts as the Proton acceptor; for 3-dehydroquinate dehydratase activity in catalysis. Lysine 1227 functions as the Schiff-base intermediate with substrate; for 3-dehydroquinate dehydratase activity in the catalytic mechanism. The interval 1306 to 1588 (PKELFVVGKP…KAIFDAVTKE (283 aa)) is shikimate dehydrogenase.

The protein in the N-terminal section; belongs to the sugar phosphate cyclases superfamily. Dehydroquinate synthase family. This sequence in the 2nd section; belongs to the EPSP synthase family. It in the 3rd section; belongs to the shikimate kinase family. In the 4th section; belongs to the type-I 3-dehydroquinase family. The protein in the C-terminal section; belongs to the shikimate dehydrogenase family. As to quaternary structure, homodimer. Requires Zn(2+) as cofactor.

Its subcellular location is the cytoplasm. It catalyses the reaction 7-phospho-2-dehydro-3-deoxy-D-arabino-heptonate = 3-dehydroquinate + phosphate. The enzyme catalyses 3-dehydroquinate = 3-dehydroshikimate + H2O. It carries out the reaction shikimate + NADP(+) = 3-dehydroshikimate + NADPH + H(+). The catalysed reaction is shikimate + ATP = 3-phosphoshikimate + ADP + H(+). It catalyses the reaction 3-phosphoshikimate + phosphoenolpyruvate = 5-O-(1-carboxyvinyl)-3-phosphoshikimate + phosphate. Its pathway is metabolic intermediate biosynthesis; chorismate biosynthesis; chorismate from D-erythrose 4-phosphate and phosphoenolpyruvate: step 2/7. It participates in metabolic intermediate biosynthesis; chorismate biosynthesis; chorismate from D-erythrose 4-phosphate and phosphoenolpyruvate: step 3/7. The protein operates within metabolic intermediate biosynthesis; chorismate biosynthesis; chorismate from D-erythrose 4-phosphate and phosphoenolpyruvate: step 4/7. It functions in the pathway metabolic intermediate biosynthesis; chorismate biosynthesis; chorismate from D-erythrose 4-phosphate and phosphoenolpyruvate: step 5/7. Its pathway is metabolic intermediate biosynthesis; chorismate biosynthesis; chorismate from D-erythrose 4-phosphate and phosphoenolpyruvate: step 6/7. Its function is as follows. The AROM polypeptide catalyzes 5 consecutive enzymatic reactions in prechorismate polyaromatic amino acid biosynthesis. This chain is Pentafunctional AROM polypeptide, found in Saccharomyces cerevisiae (strain ATCC 204508 / S288c) (Baker's yeast).